The following is a 431-amino-acid chain: tRNA(Ile)-lysidine synthase (431 aa).

26–31 is a binding site for ATP; that stretch reads SGGIDS.

The protein belongs to the tRNA(Ile)-lysidine synthase family.

The protein localises to the cytoplasm. It catalyses the reaction cytidine(34) in tRNA(Ile2) + L-lysine + ATP = lysidine(34) in tRNA(Ile2) + AMP + diphosphate + H(+). Functionally, ligates lysine onto the cytidine present at position 34 of the AUA codon-specific tRNA(Ile) that contains the anticodon CAU, in an ATP-dependent manner. Cytidine is converted to lysidine, thus changing the amino acid specificity of the tRNA from methionine to isoleucine. This chain is tRNA(Ile)-lysidine synthase, found in Wolbachia sp. subsp. Brugia malayi (strain TRS).